Reading from the N-terminus, the 260-residue chain is Thiazole synthase (260 aa).

Residue Lys96 is the Schiff-base intermediate with DXP of the active site. Residues Gly157, 183-184 (AG), and 205-206 (AS) each bind 1-deoxy-D-xylulose 5-phosphate.

The protein belongs to the ThiG family. Homotetramer. Forms heterodimers with either ThiH or ThiS.

It localises to the cytoplasm. The catalysed reaction is [ThiS sulfur-carrier protein]-C-terminal-Gly-aminoethanethioate + 2-iminoacetate + 1-deoxy-D-xylulose 5-phosphate = [ThiS sulfur-carrier protein]-C-terminal Gly-Gly + 2-[(2R,5Z)-2-carboxy-4-methylthiazol-5(2H)-ylidene]ethyl phosphate + 2 H2O + H(+). The protein operates within cofactor biosynthesis; thiamine diphosphate biosynthesis. Functionally, catalyzes the rearrangement of 1-deoxy-D-xylulose 5-phosphate (DXP) to produce the thiazole phosphate moiety of thiamine. Sulfur is provided by the thiocarboxylate moiety of the carrier protein ThiS. In vitro, sulfur can be provided by H(2)S. The chain is Thiazole synthase from Corynebacterium glutamicum (strain ATCC 13032 / DSM 20300 / JCM 1318 / BCRC 11384 / CCUG 27702 / LMG 3730 / NBRC 12168 / NCIMB 10025 / NRRL B-2784 / 534).